The primary structure comprises 210 residues: Natriuretic peptide BM026 (210 aa).

The first 26 residues, 1-26 (MVGPSRLAGGGLLLLLLALLPVALDG), serve as a signal peptide directing secretion. The interval 83-99 (CFGHKIDRISHSSGMGC) is natriuretic peptide domain 1. A disulfide bond links cysteine 83 and cysteine 99. Residues 122–134 (ESKKSRAARDRMV) show a composition bias toward basic and acidic residues. The segment at 122 to 210 (ESKKSRAARD…QFNSKSSQVA (89 aa)) is disordered. Gly residues predominate over residues 140-150 (AGGGGGGGGGD). The segment covering 156 to 176 (ELAKKDQHNNCFGRRIDRISH) has biased composition (basic and acidic residues). The interval 166-182 (CFGRRIDRISHSTDLGC) is natriuretic peptide domain 2. The cysteines at positions 166 and 182 are disulfide-linked. Residues 201-210 (QFNSKSSQVA) are compositionally biased toward polar residues.

This sequence belongs to the natriuretic peptide family. In terms of tissue distribution, expressed by the venom gland.

The protein localises to the secreted. Functionally, natriuretic peptide that dose-dependently induces the rapid relaxation of rat aortic strips phenylephrine-precontracted. Acts by stimulating cGMP production in a dose-dependent manner (by probably activating NPR1 and/or NPR2). May also show potent hypotensive effects. The sequence is that of Natriuretic peptide BM026 from Bungarus multicinctus (Many-banded krait).